A 459-amino-acid chain; its full sequence is Bifunctional protein GlmU (459 aa).

Residues 1–230 (MSNRFAVILA…FDETLGVNDR (230 aa)) form a pyrophosphorylase region. Residues 9 to 12 (LAAG), lysine 23, glutamine 73, and 78 to 79 (GT) contribute to the UDP-N-acetyl-alpha-D-glucosamine site. Aspartate 103 contacts Mg(2+). 4 residues coordinate UDP-N-acetyl-alpha-D-glucosamine: glycine 140, glutamate 155, asparagine 170, and asparagine 228. Asparagine 228 serves as a coordination point for Mg(2+). The interval 231–251 (VALSQAEIIMKNRINRKNMVN) is linker. The N-acetyltransferase stretch occupies residues 252–459 (GVTIIDPSNT…VDQLLNKKKS (208 aa)). UDP-N-acetyl-alpha-D-glucosamine is bound by residues arginine 333 and lysine 351. Catalysis depends on histidine 363, which acts as the Proton acceptor. Residues tyrosine 366 and asparagine 377 each contribute to the UDP-N-acetyl-alpha-D-glucosamine site. Residues 386–387 (NY), alanine 423, and arginine 440 each bind acetyl-CoA.

This sequence in the N-terminal section; belongs to the N-acetylglucosamine-1-phosphate uridyltransferase family. It in the C-terminal section; belongs to the transferase hexapeptide repeat family. In terms of assembly, homotrimer. Mg(2+) is required as a cofactor.

The protein resides in the cytoplasm. It carries out the reaction alpha-D-glucosamine 1-phosphate + acetyl-CoA = N-acetyl-alpha-D-glucosamine 1-phosphate + CoA + H(+). It catalyses the reaction N-acetyl-alpha-D-glucosamine 1-phosphate + UTP + H(+) = UDP-N-acetyl-alpha-D-glucosamine + diphosphate. The protein operates within nucleotide-sugar biosynthesis; UDP-N-acetyl-alpha-D-glucosamine biosynthesis; N-acetyl-alpha-D-glucosamine 1-phosphate from alpha-D-glucosamine 6-phosphate (route II): step 2/2. Its pathway is nucleotide-sugar biosynthesis; UDP-N-acetyl-alpha-D-glucosamine biosynthesis; UDP-N-acetyl-alpha-D-glucosamine from N-acetyl-alpha-D-glucosamine 1-phosphate: step 1/1. It participates in bacterial outer membrane biogenesis; LPS lipid A biosynthesis. Its function is as follows. Catalyzes the last two sequential reactions in the de novo biosynthetic pathway for UDP-N-acetylglucosamine (UDP-GlcNAc). The C-terminal domain catalyzes the transfer of acetyl group from acetyl coenzyme A to glucosamine-1-phosphate (GlcN-1-P) to produce N-acetylglucosamine-1-phosphate (GlcNAc-1-P), which is converted into UDP-GlcNAc by the transfer of uridine 5-monophosphate (from uridine 5-triphosphate), a reaction catalyzed by the N-terminal domain. This is Bifunctional protein GlmU from Bacillus cereus (strain ZK / E33L).